A 1146-amino-acid chain; its full sequence is MKTLRARFKKTELRLSPTDLGSCPPCGPCPIPKPAARGRRQSQDWGKSDERLLQAVENNDAPRVAALIARKGLVPTKLDPEGKSAFHLAAMRGAASCLEVMIAHGSNVMSADGAGYNALHLAAKYGHPQCLKQLLQASCVVDVVDSSGWTALHHAAAGGCLSCSEVLCSFKAHLNPQDRSGATPLIIAAQMCHTDLCRLLLQQGAAANDQDLQGRTALMLACEGASPETVEVLLQGGAQPGITDALGQDAAHYGALAGDKLILHLLQEAAQRPSPPSALTEDDSGEASSQNSMSSHGKQGAPKKRKAPPPPASIPMPDDRDAYEEIVRLRQERGRLLQKIRGLEQHKERRQQESPEASSLHILERQVQELQQLLVERQEEKESLGREVESLQSRLSLLENERENTSYDVTTLQDEEGELPDLPGAEVLLSRQLSPSAQEHLASLQEQVAVLTRQNQELMEKVQILENFEKDETQMEVEALAEVIPLALYDSLRAEFDQLRRQHAEALQALRQQETREVPREEGAACGESEVAGATATKNGPTHMELNGSVAPETKVNGAETIDEEAAGDETMEARTMEAEATGAEATGAEATGAKVTETKPTGAEVREMETTEEEANMETKPTGAQATDTETTGVEAMGVEATKTKAEEAEMQAYGVGAGQAEPPVTGTTNMEATGSRATGMESTGVSATGVENPGVEATVPGISAGPILHPGAAEASEKLQVELETRIRGLEEALRQREREAAAELEAALGKCEAAEAEAGRLRERVREAEGSGASGGGGGDTTQLRAALEQAREDLRDRDSRLRELEAASACLDEARASRLLAEEEARGLRAELAQREEARLEQSRELEVLREQLATARATGEQQRTAAAELGRARDAAEARVAELPAACEEARQGLAELREASEALRQSVVPASEHRRLQEEALELRGRAASLEQEVVATGKEAARLRAELERERVCSVALSEHERIVGTLQANVAQLEGQLEELGRRHEKTSAEVFQVQREALFMKSERHAAEAQLATAEQQLRGLRTEAERARQAQSRAQEALDKAKEKDKKITELSKEVFNLKEALKEQPAALATPEVEALRDQVKDLQQQLQEAARDHSSVVALYRSHLLYAIQGQMDEDVQRILSQILQMQRLQAQGR.

ANK repeat units follow at residues 81 to 110 (EGKS…NVMS), 114 to 143 (AGYN…VVDV), 147 to 176 (SGWT…HLNP), 180 to 209 (SGAT…AAND), and 213 to 242 (QGRT…QPGI). Disordered regions lie at residues 272 to 320 (RPSP…PDDR), 607 to 627 (REME…GAQA), and 766 to 785 (ERVR…GDTT). Residues 286–297 (EASSQNSMSSHG) are compositionally biased toward polar residues. The stretch at 320-517 (RDAYEEIVRL…QALRQQETRE (198 aa)) forms a coiled coil. A coiled-coil region spans residues 714–1110 (AAEASEKLQV…AARDHSSVVA (397 aa)).

As to quaternary structure, homodimer. Interacts (via C-terminal domain) with TRIOBP (via C-terminal domain) isoform 4; recruits TRIOBP isoform 4 to stereocilia rootlets.

The protein localises to the cell membrane. It localises to the cell projection. Its subcellular location is the stereocilium. In terms of biological role, component of the stereocilia rootlet in hair cells of inner ear. Bridges the apical plasma membrane with the lower rootlet and maintains normal distribution of TRIOBP, thereby reinforcing stereocilia insertion points and organizing rootlets for hearing with long-term resilience. The chain is Ankyrin repeat domain-containing protein 24 from Homo sapiens (Human).